The primary structure comprises 305 residues: Serine/threonine-protein kinase 16 (305 aa).

G2 carries the N-myristoyl glycine lipid modification. S-palmitoyl cysteine attachment occurs at residues C6 and C8. Residues 20–293 (YLFVQKLGEG…PVLLSQLEAL (274 aa)) form the Protein kinase domain. ATP is bound by residues 26 to 34 (LGEGGFSYV) and K49. D148 acts as the Proton acceptor in catalysis. The tract at residues 166-202 (DLGSMNQACIQVEGSRQALALQDWAAQRCTISYRAPE) is activation loop. Position 197 is a phosphoserine; by autocatalysis (S197). Position 198 is a phosphotyrosine; by autocatalysis (Y198).

The protein belongs to the protein kinase superfamily. Ser/Thr protein kinase family. In terms of assembly, monomer. Interacts with DRG1 (via its N-terminal); the interaction phosphorylates DRG1. In terms of processing, mainly autophosphorylated on serine/threonine residues. Also autophosphorylated on Tyr-198. Ubiquitously expressed at low levels. Relatively higher levels in testis, kidney and liver.

It is found in the cytoplasm. It localises to the perinuclear region. Its subcellular location is the membrane. It catalyses the reaction L-seryl-[protein] + ATP = O-phospho-L-seryl-[protein] + ADP + H(+). The enzyme catalyses L-threonyl-[protein] + ATP = O-phospho-L-threonyl-[protein] + ADP + H(+). It carries out the reaction L-tyrosyl-[protein] + ATP = O-phospho-L-tyrosyl-[protein] + ADP + H(+). Functionally, membrane-associated protein kinase that phosphorylates on serine and threonine residues. In vitro substrates include DRG1, ENO1 and EIF4EBP1. Also autophosphorylates. May be involved in secretory vesicle trafficking or intracellular signaling. May have a role in regulating stromal-epithelial interactions that occur during ductal morphogenesis in the mammary gland. May be involved in TGF-beta signaling. Able to autophosphorylate on Tyr residue; it is however unclear whether it has tyrosine-protein kinase toward other proteins. This chain is Serine/threonine-protein kinase 16 (Stk16), found in Mus musculus (Mouse).